We begin with the raw amino-acid sequence, 510 residues long: Maturase K (510 aa).

This sequence belongs to the intron maturase 2 family. MatK subfamily.

The protein localises to the plastid. It is found in the chloroplast. Functionally, usually encoded in the trnK tRNA gene intron. Probably assists in splicing its own and other chloroplast group II introns. The protein is Maturase K of Populus trichocarpa (Western balsam poplar).